The following is a 90-amino-acid chain: UPF0223 protein lwe1035 (90 aa).

The protein belongs to the UPF0223 family.

This Listeria welshimeri serovar 6b (strain ATCC 35897 / DSM 20650 / CCUG 15529 / CIP 8149 / NCTC 11857 / SLCC 5334 / V8) protein is UPF0223 protein lwe1035.